A 375-amino-acid polypeptide reads, in one-letter code: Venom allergen 5 (375 aa).

The N-terminal stretch at 1 to 26 (MSAPVGIPSLLLALCALLCVLNAVRS) is a signal peptide. An SCP domain is found at 66–210 (VRLHNNLRSK…RRYTQIVCNY (145 aa)). N-linked (GlcNAc...) asparagine glycans are attached at residues N300 and N366.

The protein belongs to the CRISP family. Venom allergen 5-like subfamily. Post-translationally, contains 9 disulfide bonds. As to expression, expressed by the venom gland.

Its subcellular location is the secreted. This chain is Venom allergen 5, found in Lycosa singoriensis (Wolf spider).